The primary structure comprises 536 residues: Probable 1,4-beta-D-glucan cellobiohydrolase B (536 aa).

Positions M1 to A21 are cleaved as a signal peptide. The segment at Q22–S458 is catalytic. E233 functions as the Nucleophile in the catalytic mechanism. E238 serves as the catalytic Proton donor. N-linked (GlcNAc...) asparagine glycans are attached at residues N351 and N414. Positions T459–S500 are ser/Thr-rich linker. A disordered region spans residues S464–T499. The 37-residue stretch at S500–L536 folds into the CBM1 domain. Cystine bridges form between C508-C525 and C519-C535.

It belongs to the glycosyl hydrolase 7 (cellulase C) family.

The protein resides in the secreted. The enzyme catalyses Hydrolysis of (1-&gt;4)-beta-D-glucosidic linkages in cellulose and cellotetraose, releasing cellobiose from the non-reducing ends of the chains.. In terms of biological role, the biological conversion of cellulose to glucose generally requires three types of hydrolytic enzymes: (1) Endoglucanases which cut internal beta-1,4-glucosidic bonds; (2) Exocellobiohydrolases that cut the disaccharide cellobiose from the non-reducing end of the cellulose polymer chain; (3) Beta-1,4-glucosidases which hydrolyze the cellobiose and other short cello-oligosaccharides to glucose. The protein is Probable 1,4-beta-D-glucan cellobiohydrolase B (cbhB) of Aspergillus niger (strain ATCC MYA-4892 / CBS 513.88 / FGSC A1513).